A 483-amino-acid polypeptide reads, in one-letter code: 6-phosphogluconate dehydrogenase, decarboxylating (483 aa).

NADP(+) is bound by residues 10–15 (GLAVMG) and 33–35 (NRT). Lys-38 carries the post-translational modification N6-acetyllysine. Ser-57 carries the post-translational modification Phosphoserine. Lys-59 bears the N6-acetyllysine mark. Residues 75 to 77 (VKA) and Asn-103 contribute to the NADP(+) site. Residues Asn-103 and 129–131 (SGG) contribute to the substrate site. A Phosphoserine modification is found at Ser-129. Catalysis depends on Lys-184, which acts as the Proton acceptor. 187 to 188 (HN) is a substrate binding site. Residue Glu-191 is the Proton donor of the active site. Substrate-binding residues include Tyr-192, Lys-261, Arg-288, Arg-447, and His-453. 478-481 (SSSY) lines the NADP(+) pocket.

It belongs to the 6-phosphogluconate dehydrogenase family. As to quaternary structure, homodimer.

The protein localises to the cytoplasm. The catalysed reaction is 6-phospho-D-gluconate + NADP(+) = D-ribulose 5-phosphate + CO2 + NADPH. It participates in carbohydrate degradation; pentose phosphate pathway; D-ribulose 5-phosphate from D-glucose 6-phosphate (oxidative stage): step 3/3. In terms of biological role, catalyzes the oxidative decarboxylation of 6-phosphogluconate to ribulose 5-phosphate and CO(2), with concomitant reduction of NADP to NADPH. The protein is 6-phosphogluconate dehydrogenase, decarboxylating of Rattus norvegicus (Rat).